A 624-amino-acid polypeptide reads, in one-letter code: Chaperone protein HtpG (624 aa).

The a; substrate-binding stretch occupies residues 1–336 (MKGQETRGFQ…SNDLPLNVSR (336 aa)). The b stretch occupies residues 337–552 (EILQDSTVTR…ADEMSTQMAK (216 aa)). Residues 553–624 (LFAAAGQSVP…IRRMNQLLVS (72 aa)) are c.

This sequence belongs to the heat shock protein 90 family. As to quaternary structure, homodimer.

The protein localises to the cytoplasm. In terms of biological role, molecular chaperone. Has ATPase activity. The protein is Chaperone protein HtpG of Salmonella typhi.